Consider the following 495-residue polypeptide: ATP-NADH kinase YEF1 (495 aa).

A disordered region spans residues 442 to 480 (KYRLDSSKNGNDTISNPLESSCISSDAQDEERKSVTETE). Over residues 448–467 (SKNGNDTISNPLESSCISSD) the composition is skewed to polar residues.

It belongs to the NAD kinase family. In terms of assembly, homooctamer. Mg(2+) is required as a cofactor. Requires Mn(2+) as cofactor. It depends on Co(2+) as a cofactor. Ca(2+) serves as cofactor.

The enzyme catalyses NADH + ATP = ADP + NADPH + H(+). ATP-NADH kinase with a low phosphorylation activity of both NADH and NAD(+) to produce NADP and NADPH by using ATP. UTR1 is responsible for essentially all of the NAD/NADH kinase activity resident in the cytoplasm, whereas POS5 is responsible for all mitochondrial NAD/NADH kinase activity and consequent mitochondrial genome maintenance. YEF1 can substitute for UTR1 when overexpressed. This Saccharomyces cerevisiae (strain ATCC 204508 / S288c) (Baker's yeast) protein is ATP-NADH kinase YEF1 (YEF1).